A 554-amino-acid polypeptide reads, in one-letter code: Membrane protein insertase YidC (554 aa).

5 helical membrane passes run 7-24, 362-382, 436-456, 475-495, and 510-530; these read VLWV…DNWQ, VVGN…AVFF, LPVV…LASV, PFFI…SLNP, and PIAF…YYVV.

Belongs to the OXA1/ALB3/YidC family. Type 1 subfamily. As to quaternary structure, interacts with the Sec translocase complex via SecD. Specifically interacts with transmembrane segments of nascent integral membrane proteins during membrane integration.

The protein localises to the cell inner membrane. Required for the insertion and/or proper folding and/or complex formation of integral membrane proteins into the membrane. Involved in integration of membrane proteins that insert both dependently and independently of the Sec translocase complex, as well as at least some lipoproteins. Aids folding of multispanning membrane proteins. This Burkholderia vietnamiensis (strain G4 / LMG 22486) (Burkholderia cepacia (strain R1808)) protein is Membrane protein insertase YidC.